The chain runs to 236 residues: Leucyl/phenylalanyl-tRNA--protein transferase (236 aa).

It belongs to the L/F-transferase family.

It is found in the cytoplasm. It carries out the reaction N-terminal L-lysyl-[protein] + L-leucyl-tRNA(Leu) = N-terminal L-leucyl-L-lysyl-[protein] + tRNA(Leu) + H(+). The catalysed reaction is N-terminal L-arginyl-[protein] + L-leucyl-tRNA(Leu) = N-terminal L-leucyl-L-arginyl-[protein] + tRNA(Leu) + H(+). It catalyses the reaction L-phenylalanyl-tRNA(Phe) + an N-terminal L-alpha-aminoacyl-[protein] = an N-terminal L-phenylalanyl-L-alpha-aminoacyl-[protein] + tRNA(Phe). Functions in the N-end rule pathway of protein degradation where it conjugates Leu, Phe and, less efficiently, Met from aminoacyl-tRNAs to the N-termini of proteins containing an N-terminal arginine or lysine. In Vibrio parahaemolyticus serotype O3:K6 (strain RIMD 2210633), this protein is Leucyl/phenylalanyl-tRNA--protein transferase.